The primary structure comprises 342 residues: GTP 3',8-cyclase (342 aa).

In terms of domain architecture, Radical SAM core spans 18–247 (GFSRRFYYLR…QLRGADDGPA (230 aa)). Arg-27 is a GTP binding site. Residues Cys-34 and Cys-38 each coordinate [4Fe-4S] cluster. Residue Tyr-40 coordinates S-adenosyl-L-methionine. Cys-41 serves as a coordination point for [4Fe-4S] cluster. Arg-81 lines the GTP pocket. S-adenosyl-L-methionine is bound at residue Gly-85. Thr-112 serves as a coordination point for GTP. Ser-136 contacts S-adenosyl-L-methionine. Lys-173 contributes to the GTP binding site. Met-207 is an S-adenosyl-L-methionine binding site. Cys-270 and Cys-273 together coordinate [4Fe-4S] cluster. 275-277 (RLR) lines the GTP pocket. Residue Cys-287 participates in [4Fe-4S] cluster binding.

This sequence belongs to the radical SAM superfamily. MoaA family. Monomer and homodimer. Requires [4Fe-4S] cluster as cofactor.

It catalyses the reaction GTP + AH2 + S-adenosyl-L-methionine = (8S)-3',8-cyclo-7,8-dihydroguanosine 5'-triphosphate + 5'-deoxyadenosine + L-methionine + A + H(+). Its pathway is cofactor biosynthesis; molybdopterin biosynthesis. Its function is as follows. Catalyzes the cyclization of GTP to (8S)-3',8-cyclo-7,8-dihydroguanosine 5'-triphosphate. The sequence is that of GTP 3',8-cyclase from Aeromonas hydrophila subsp. hydrophila (strain ATCC 7966 / DSM 30187 / BCRC 13018 / CCUG 14551 / JCM 1027 / KCTC 2358 / NCIMB 9240 / NCTC 8049).